Consider the following 894-residue polypeptide: Alpha-actinin-2 (894 aa).

Residues 1–254 (MNQIEPGVQY…IMTYVSCFYH (254 aa)) are actin-binding. 2 Calponin-homology (CH) domains span residues 38–142 (KQQR…LRFA) and 151–257 (TSAK…HAFA). T237 is modified (phosphothreonine). 4 Spectrin repeats span residues 281–391 (RLME…WLLN), 401–506 (HLAE…ALER), 516–627 (QLHL…SLQE), and 637–740 (RLRR…EVET). EF-hand domains follow at residues 753–788 (EQMN…MGYD) and 789–824 (LGEA…ETAD). The Ca(2+) site is built by D766, N770, D777, D802, N804, and T808.

This sequence belongs to the alpha-actinin family. As to quaternary structure, homodimer; antiparallel. Also forms heterodimers with ACTN3. Interacts with ADAM12, MYOZ1, MYOZ2 and MYOZ3. Interacts via its C-terminal region with the LDB3 PDZ domain. Interacts with XIRP2. Interacts with DST (via N-terminus). Interacts with PARVB. Interacts with SYNPO2. Post-translationally, ubiquitinated by FBXL22, leading to proteasomal degradation.

The protein localises to the cytoplasm. It localises to the myofibril. It is found in the sarcomere. Its subcellular location is the z line. In terms of biological role, F-actin cross-linking protein which is thought to anchor actin to a variety of intracellular structures. This is a bundling protein. The chain is Alpha-actinin-2 (ACTN2) from Bos taurus (Bovine).